Consider the following 485-residue polypeptide: MQFSSYEDLRSRLLSHAVTCEAVARHYLDRIRSHEGDNIYITVFENEALQRARSLDLKLAGGGTPGRLFGMPMAIKDNISMKGAPLTCASKMLEGYTSVYDATAVLRLEAEDAIFLGKTNMDEFAMGSSNENSAFGPVPNPFDNQRVPGGSSGGSAAAVAAGLAMVALGSDTGGSVRQPAGFCDIVGLKPTYGRISRYGLVAFASSFDQIGVLALNCDDAALVLEVMAGVDGKDATSSAHPVPAYAAEMTDVSLKGLRIGVPEEFFNESLNPDVASVVRAKLEELRLQGAELVNLTLPQSDYAIAAYYILVTAEASSNLARFDGARYGYRSEAADDLSSMYVKSRTEGFGAEVKRRIMLGTYVLSAGYYDTYYKKAQQVRRLFQDRYREALKGVDVIAGPTSPFPPFGIGDKTADPLEMYLADVFTVPASIVGMPALSVPVGYDSLGLPVGIHLICNFFEEGKMLGIARHMQRPDSSRIPAPSNH.

Catalysis depends on charge relay system residues Lys76 and Ser151. Catalysis depends on Ser175, which acts as the Acyl-ester intermediate.

This sequence belongs to the amidase family. GatA subfamily. As to quaternary structure, heterotrimer of A, B and C subunits.

The catalysed reaction is L-glutamyl-tRNA(Gln) + L-glutamine + ATP + H2O = L-glutaminyl-tRNA(Gln) + L-glutamate + ADP + phosphate + H(+). Allows the formation of correctly charged Gln-tRNA(Gln) through the transamidation of misacylated Glu-tRNA(Gln) in organisms which lack glutaminyl-tRNA synthetase. The reaction takes place in the presence of glutamine and ATP through an activated gamma-phospho-Glu-tRNA(Gln). The sequence is that of Glutamyl-tRNA(Gln) amidotransferase subunit A from Chlorobium luteolum (strain DSM 273 / BCRC 81028 / 2530) (Pelodictyon luteolum).